A 263-amino-acid chain; its full sequence is MGLMNAFDSQTEDSSPAIGRNLRSRPLARKKLSEMVEEELEQMIRRREFGEGEQLPSERELMAFFNVGRPSVREALAALKRKGLVQINNGERARVSRPSADTIIGELSGMAKDFLSHPGGIAHFEQLRLFFESSLVRYAAEHATDEQIDLLAKALEINSQSLDNNAAFIRSDVDFHRVLAEIPGNPIFMAIHVALLDWLIAARPTVTDQALHEHNNVSYQQHIAIVDAIRRHDPDEADRALQSHLNSVSATWYAFGQTTNKKK.

Positions 1-22 (MGLMNAFDSQTEDSSPAIGRNL) are disordered. Residues 30–98 (KKLSEMVEEE…NGERARVSRP (69 aa)) enclose the HTH gntR-type domain. The H-T-H motif DNA-binding region spans 58–77 (ERELMAFFNVGRPSVREALA).

This sequence belongs to the NanR family.

In terms of biological role, transcriptional repressor that controls expression of the genes required for the catabolism of sialic acids. In Shigella dysenteriae serotype 1 (strain Sd197), this protein is HTH-type transcriptional repressor NanR.